The primary structure comprises 165 residues: MSHPALTQLRALRYFDAIPALEPHLLDWLLLEDSMTKRFEQQGKRVSVTLIREAFVGQSEVEEASGLLPSESRYWLREILLCADGEPWLAGRTVVPESTLCGPEQVLQHLGKTPLGRYLFTSSTLTRDFIEIGRDATLWGRRSRLRLSGKPLLLTELFLPASPLY.

Substrate is bound by residues Met-35, Arg-77, Leu-115, and Glu-156.

This sequence belongs to the UbiC family. In terms of assembly, monomer.

It is found in the cytoplasm. It catalyses the reaction chorismate = 4-hydroxybenzoate + pyruvate. It functions in the pathway cofactor biosynthesis; ubiquinone biosynthesis. Removes the pyruvyl group from chorismate, with concomitant aromatization of the ring, to provide 4-hydroxybenzoate (4HB) for the ubiquinone pathway. The sequence is that of Chorismate pyruvate-lyase from Salmonella enteritidis PT4 (strain P125109).